The primary structure comprises 457 residues: tRNA modification GTPase MnmE (457 aa).

Residues R25, E87, and R126 each coordinate (6S)-5-formyl-5,6,7,8-tetrahydrofolate. The region spanning 223 to 377 (GIATAIIGRP…IEEKINQLFF (155 aa)) is the TrmE-type G domain. Residue N233 participates in K(+) binding. GTP is bound by residues 233-238 (NVGKSS), 252-258 (TDIAGTT), and 277-280 (DTAG). Residue S237 participates in Mg(2+) binding. K(+) contacts are provided by T252, I254, and T257. T258 contributes to the Mg(2+) binding site. A (6S)-5-formyl-5,6,7,8-tetrahydrofolate-binding site is contributed by K457.

The protein belongs to the TRAFAC class TrmE-Era-EngA-EngB-Septin-like GTPase superfamily. TrmE GTPase family. In terms of assembly, homodimer. Heterotetramer of two MnmE and two MnmG subunits. K(+) is required as a cofactor.

The protein localises to the cytoplasm. Its function is as follows. Exhibits a very high intrinsic GTPase hydrolysis rate. Involved in the addition of a carboxymethylaminomethyl (cmnm) group at the wobble position (U34) of certain tRNAs, forming tRNA-cmnm(5)s(2)U34. The chain is tRNA modification GTPase MnmE from Streptococcus suis (strain 98HAH33).